A 547-amino-acid polypeptide reads, in one-letter code: Rho GTPase-activating protein 36 (547 aa).

The N-terminal stretch at Met1–Gly40 is a signal peptide. The Rho-GAP domain occupies Met226–Phe426. The disordered stretch occupies residues Ala485–Pro547. A compositionally biased stretch (basic and acidic residues) spans Glu524–Lys539.

May interacts (via the Rho-GAP domain) with the active form of RAC1. As to expression, detected in the outer root sheath of hair follicles at the level of the stem cell bulge, during the anagen and telogen phases of hair growth (at protein level).

Functionally, GTPase activator for the Rho-type GTPases by converting them to an inactive GDP-bound state. The sequence is that of Rho GTPase-activating protein 36 (ARHGAP36) from Homo sapiens (Human).